An 84-amino-acid polypeptide reads, in one-letter code: uncharacterized protein (84 aa).

The chain crosses the membrane as a helical span at residues 13–35 (TTLVLTIISTTTTTLFAIIQLYL). Positions 41-84 (LKDAVKEIVNSELSNLKTEIEELKIKQDELSRQVEEIKRKLDQK) form a coiled coil.

The protein localises to the host membrane. This is an uncharacterized protein from Sulfolobus islandicus rod-shaped virus 1 (SIRV-1).